The following is a 108-amino-acid chain: Large ribosomal subunit protein eL33A (108 aa).

The protein belongs to the eukaryotic ribosomal protein eL33 family. As to quaternary structure, component of the large ribosomal subunit (LSU). Mature yeast ribosomes consist of a small (40S) and a large (60S) subunit. The 40S small subunit contains 1 molecule of ribosomal RNA (18S rRNA) and at least 33 different proteins. The large 60S subunit contains 3 rRNA molecules (25S, 5.8S and 5S rRNA) and at least 46 different proteins.

The protein localises to the cytoplasm. Its subcellular location is the nucleus. It localises to the nucleolus. Its function is as follows. Component of the ribosome, a large ribonucleoprotein complex responsible for the synthesis of proteins in the cell. The small ribosomal subunit (SSU) binds messenger RNAs (mRNAs) and translates the encoded message by selecting cognate aminoacyl-transfer RNA (tRNA) molecules. The large subunit (LSU) contains the ribosomal catalytic site termed the peptidyl transferase center (PTC), which catalyzes the formation of peptide bonds, thereby polymerizing the amino acids delivered by tRNAs into a polypeptide chain. The nascent polypeptides leave the ribosome through a tunnel in the LSU and interact with protein factors that function in enzymatic processing, targeting, and the membrane insertion of nascent chains at the exit of the ribosomal tunnel. In Schizosaccharomyces pombe (strain 972 / ATCC 24843) (Fission yeast), this protein is Large ribosomal subunit protein eL33A (rpl35b).